Reading from the N-terminus, the 284-residue chain is 4-hydroxybenzoate octaprenyltransferase (284 aa).

7 helical membrane-spanning segments follow: residues 33–53 (VIAAQGIPSWDVLIVFVLGVF), 93–113 (IGLFLVLAVSSFLLVLTMNPL), 136–156 (HIPQLFLGLAFSWAIPMAWAA), 159–179 (GELPVMVWFVFVINALWTIAY), 209–229 (LIIGVLQLVTLAMLVGLGQFY), 235–252 (YYWTVLIAASLFVYQQHL), and 264–284 (AFLNNNYVGMVIAIGLLVAFW).

It belongs to the UbiA prenyltransferase family. The cofactor is Mg(2+).

The protein resides in the cell inner membrane. It carries out the reaction all-trans-octaprenyl diphosphate + 4-hydroxybenzoate = 4-hydroxy-3-(all-trans-octaprenyl)benzoate + diphosphate. The protein operates within cofactor biosynthesis; ubiquinone biosynthesis. Functionally, catalyzes the prenylation of para-hydroxybenzoate (PHB) with an all-trans polyprenyl group. Mediates the second step in the final reaction sequence of ubiquinone-8 (UQ-8) biosynthesis, which is the condensation of the polyisoprenoid side chain with PHB, generating the first membrane-bound Q intermediate 3-octaprenyl-4-hydroxybenzoate. This chain is 4-hydroxybenzoate octaprenyltransferase, found in Vibrio parahaemolyticus serotype O3:K6 (strain RIMD 2210633).